A 369-amino-acid chain; its full sequence is Histidinol-phosphate aminotransferase 2 (369 aa).

An N6-(pyridoxal phosphate)lysine modification is found at lysine 231.

The protein belongs to the class-II pyridoxal-phosphate-dependent aminotransferase family. Histidinol-phosphate aminotransferase subfamily. In terms of assembly, homodimer. Requires pyridoxal 5'-phosphate as cofactor.

It catalyses the reaction L-histidinol phosphate + 2-oxoglutarate = 3-(imidazol-4-yl)-2-oxopropyl phosphate + L-glutamate. It functions in the pathway amino-acid biosynthesis; L-histidine biosynthesis; L-histidine from 5-phospho-alpha-D-ribose 1-diphosphate: step 7/9. In Legionella pneumophila subsp. pneumophila (strain Philadelphia 1 / ATCC 33152 / DSM 7513), this protein is Histidinol-phosphate aminotransferase 2.